We begin with the raw amino-acid sequence, 245 residues long: Eukaryotic translation initiation factor 6 (245 aa).

Belongs to the eIF-6 family. Monomer. Associates with the 60S ribosomal subunit.

It is found in the cytoplasm. The protein localises to the nucleus. The protein resides in the nucleolus. In terms of biological role, binds to the 60S ribosomal subunit and prevents its association with the 40S ribosomal subunit to form the 80S initiation complex in the cytoplasm. May also be involved in ribosome biogenesis. In Drosophila melanogaster (Fruit fly), this protein is Eukaryotic translation initiation factor 6.